The chain runs to 414 residues: Transcriptional repressor protein YY1 (414 aa).

An interaction with the SMAD1/SMAD4 complex region spans residues 1-170; the sequence is MASGDTLYIA…GGGSSSSGGG (170 aa). The tract at residues 33 to 81 is disordered; the sequence is VETIETTVVGEEEEEDDDDEDGGGGDHGGGGGHGHAGHHHHHHHHHHHP. The segment covering 42–55 has biased composition (acidic residues); it reads GEEEEEDDDDEDGG. Residues 57 to 66 show a composition bias toward gly residues; that stretch reads GDHGGGGGHG. The span at 67–81 shows a compositional bias: basic residues; sequence HAGHHHHHHHHHHHP. Residues 116-260 are gly-rich region involved in interaction with HCFC1; sequence DDSDGLRAED…YSEYMTGKKL (145 aa). S118 carries the post-translational modification Phosphoserine; by CK2. The interval 157 to 203 is disordered; that stretch reads GKSGGGGSSSSGGGRVKKGGGKKSGKKSYLSGGAGAAGGGGADPGNK. Residues 158-170 are compositionally biased toward gly residues; that stretch reads KSGGGGSSSSGGG. Residues 171–182 show a composition bias toward basic residues; the sequence is RVKKGGGKKSGK. Residues K182 and K183 each participate in a glycyl lysine isopeptide (Lys-Gly) (interchain with G-Cter in SUMO2) cross-link. S187 carries the post-translational modification Phosphoserine. The segment covering 188–199 has biased composition (gly residues); that stretch reads GGAGAAGGGGAD. Glycyl lysine isopeptide (Lys-Gly) (interchain with G-Cter in SUMO2) cross-links involve residues K208 and K230. S247 is subject to Phosphoserine. The involved in nuclear matrix association stretch occupies residues 257–341; that stretch reads GKKLPPGGIP…KAFVESSKLK (85 aa). Residues K286 and K288 each participate in a glycyl lysine isopeptide (Lys-Gly) (interchain with G-Cter in SUMO2) cross-link. The segment at 295–414 is binding to DNA; that stretch reads TIACPHKGCT…LTHAKAKNNQ (120 aa). 3 C2H2-type zinc fingers span residues 296-320, 325-347, and 353-377; these read IACPHKGCTKMFRDNSAMRKHLHTH, HVCAECGKAFVESSKLKRHQLVH, and FQCTFEGCGKRFSLDFNLRTHVRIH. Residues C298, C303, H316, H320, C327, C330, H343, H347, C355, C360, H373, and H377 each contribute to the Zn(2+) site. The involved in repression of activated transcription stretch occupies residues 333–371; it reads AFVESSKLKRHQLVHTGEKPFQCTFEGCGKRFSLDFNLR. An involved in masking transactivation domain region spans residues 371 to 397; that stretch reads RTHVRIHTGDRPYVCPFDGCNKKFAQS. Position 378 is a phosphothreonine (T378). A C2H2-type 4 zinc finger spans residues 383-407; that stretch reads YVCPFDGCNKKFAQSTNLKSHILTH. Zn(2+) contacts are provided by C385, C390, H403, and H407. Residues K409 and K411 each participate in a glycyl lysine isopeptide (Lys-Gly) (interchain with G-Cter in SUMO2) cross-link.

This sequence belongs to the YY transcription factor family. In terms of assembly, interacts with YAF2 through the region encompassing the first and second zinc fingers. Component of the chromatin remodeling INO80 complex; specifically part of a complex module associated with the DBINO domain of INO80. Interacts with EED and EZH2; the interactions are indicative for an association with the PRC2/EED-EZH2 complex. Interacts with SFMBT2. Found in a complex with SMAD1 and SMAD4. Found in a complex with YY1, SIN3A and HDAC1. Accessory component of the polycomb repressive deubiquitinase (PR-DUB) complex, at least composed of BAP1, one of ASXL1, ASXL2 or (probably) ASXL3 and one of MBD5 or MBD6; the PR-DUB core associates with a number of accessory proteins, including FOXK1, FOXK2, KDM1B, HCFC1, YY1 and OGT. Interacts (via Gly-rich region) with HCFC1; the interaction is direct. Interacts (via C-terminal zinc-finger domains) with BAP1 (via ULD domain); the interaction is direct and requires HCFC1. In terms of processing, phosphorylation at Ser-118 by CK2 prevents proteolytic cleavage by caspase-7 (CASP7) during apoptosis. Post-translationally, proteolytically cleaved by caspase-7 (CASP7) in response to apoptosis. Phosphorylation at Ser-118 protects against proteolytic cleavage. Transiently poly-ADP-ribosylated by PARP1 upon DNA damage, with the effect of decreasing affinity of YY1 to its cognate DNA binding sites. In terms of processing, ubiquitinated.

The protein resides in the nucleus matrix. Its function is as follows. Multifunctional transcription factor that exhibits positive and negative control on a large number of cellular and viral genes by binding to sites overlapping the transcription start site. Binds to the consensus sequence 5'-CCGCCATNTT-3'; some genes have been shown to contain a longer binding motif allowing enhanced binding; the initial CG dinucleotide can be methylated greatly reducing the binding affinity. The effect on transcription regulation is depending upon the context in which it binds and diverse mechanisms of action include direct activation or repression, indirect activation or repression via cofactor recruitment, or activation or repression by disruption of binding sites or conformational DNA changes. Its activity is regulated by transcription factors and cytoplasmic proteins that have been shown to abrogate or completely inhibit YY1-mediated activation or repression. For example, it acts as a repressor in absence of adenovirus E1A protein but as an activator in its presence. Acts synergistically with the SMAD1 and SMAD4 in bone morphogenetic protein (BMP)-mediated cardiac-specific gene expression. Binds to SMAD binding elements (SBEs) (5'-GTCT/AGAC-3') within BMP response element (BMPRE) of cardiac activating regions. May play an important role in development and differentiation. Proposed to recruit the PRC2/EED-EZH2 complex to target genes that are transcriptional repressed. Involved in DNA repair. In vitro, binds to DNA recombination intermediate structures (Holliday junctions). Plays a role in regulating enhancer activation. Recruits the PR-DUB complex to specific gene-regulatory regions. Functionally, proposed core component of the chromatin remodeling INO80 complex which is involved in transcriptional regulation, DNA replication and probably DNA repair; proposed to target the INO80 complex to YY1-responsive elements. The polypeptide is Transcriptional repressor protein YY1 (YY1) (Homo sapiens (Human)).